The sequence spans 252 residues: Undecaprenyl-diphosphatase (252 aa).

The next 7 helical transmembrane spans lie at 1–21 (MTTL…FLPI), 42–62 (HKAF…FLYF), 74–94 (ILIA…IIKS), 95–115 (LFNP…LILI), 172–192 (AAEF…FYDV), 206–226 (NLIV…KWLL), and 232–252 (HSFI…YLWY).

This sequence belongs to the UppP family.

It is found in the cell inner membrane. The catalysed reaction is di-trans,octa-cis-undecaprenyl diphosphate + H2O = di-trans,octa-cis-undecaprenyl phosphate + phosphate + H(+). In terms of biological role, catalyzes the dephosphorylation of undecaprenyl diphosphate (UPP). Confers resistance to bacitracin. This Sulfurihydrogenibium sp. (strain YO3AOP1) protein is Undecaprenyl-diphosphatase.